The following is an 846-amino-acid chain: Pseudolaratriene synthase, chloroplastic (846 aa).

Residues 1–58 (MSRFTSATHGLNLSIKMPISVSQVPSIRSNTSKYELQKLRSTGRSVLQTRRQLAIINM) constitute a chloroplast transit peptide. Mg(2+) is bound by residues Asp-595, Asp-599, and Asp-747. The DDXXD motif motif lies at 595–599 (DDIYD).

Belongs to the terpene synthase family. The cofactor is Mg(2+). As to expression, expressed in young and mature roots. Expressed at low levels in barks.

It localises to the plastid. The protein localises to the chloroplast. It catalyses the reaction (2E,6E,10E)-geranylgeranyl diphosphate = pseudolaratriene + diphosphate. It participates in terpene metabolism. Functionally, converts geranylgeranyl diphosphate to an new 5,7-fused bicyclic diterpene, named pseudolaratriene. Catalyzes the first committed step in pseudolaric acid B (PAB) biosynthesis. PAB exhibits antiproliferative activity by inhibiting microtubule polymerization, and has demonstrated antitumor properties against several cancer types. The sequence is that of Pseudolaratriene synthase, chloroplastic from Pseudolarix amabilis (Golden larch).